Reading from the N-terminus, the 319-residue chain is uncharacterized protein (319 aa).

An N-terminal signal peptide occupies residues Met-1–Ala-27. The region spanning Pro-130 to Gly-306 is the NodB homology domain.

The protein belongs to the polysaccharide deacetylase family.

This is an uncharacterized protein from Bacillus subtilis (strain 168).